We begin with the raw amino-acid sequence, 204 residues long: MGKDPRKPRGKMSSYAYFVQTRREEHKKKHPEASVNFSEFSKKCSERWKTMSAKEKGKFEDLAKLDKVRYEREMRSYIPPKGEKKKRFKDPNAPKRPSSAFFIFCADFRPQVKGETPGLSIGDVAKKLGEKWNNLTAEDKVPYEKKASRLKEKYEKDITAYRNKGKVPVSMPAKAAAPAKDDDDDDDDDDDDEDDDDDDDEDDE.

2 DNA-binding regions (HMG box) span residues 8-78 (PRGK…RSYI) and 94-162 (PKRP…TAYR). The segment at 162–204 (RNKGKVPVSMPAKAAAPAKDDDDDDDDDDDDEDDDDDDDEDDE) is disordered. Residues 181 to 204 (DDDDDDDDDDDDEDDDDDDDEDDE) are compositionally biased toward acidic residues.

It belongs to the HMGB family.

It localises to the nucleus. Its subcellular location is the chromosome. Functionally, binds preferentially single-stranded DNA and unwinds double-stranded DNA. In Oncorhynchus mykiss (Rainbow trout), this protein is High mobility group-T protein.